Consider the following 557-residue polypeptide: E3 ubiquitin-protein ligase ARIH1 (557 aa).

The segment covering 1 to 47 has biased composition (acidic residues); that stretch reads MDSDEGYNYEFDEDEECSEEDSGAEEEEDEDDDEPDDDTLDLGEVEL. The tract at residues 1 to 95 is disordered; it reads MDSDEGYNYE…GGGGGPGHEQ (95 aa). A compositionally biased stretch (gly residues) spans 65 to 92; it reads ETGGGGGSALGPGGGGGGGGGGGGGGPG. The UBA-like stretch occupies residues 105 to 153; the sequence is TAEQILQHMVECIREVNEVIQNPATITRILLSHFNWDKEKLMERYFDGN. N6-acetyllysine is present on Lys142. The tract at residues 182-393 is TRIAD supradomain; it reads QDMPCQICYL…SAWYNCNRYN (212 aa). Zn(2+)-binding residues include Cys186, Cys189, Cys203, His205, Cys208, Cys211, Cys231, Cys236, Cys276, Cys281, Cys297, Cys299, Cys304, Cys307, His312, Cys317, Cys344, and Cys347. The segment at 186-236 adopts an RING-type 1 zinc-finger fold; it reads CQICYLNYPNSYFTGLECGHKFCMQCWSEYLTTKIMEEGMGQTISCPAHGC. The segment at 256–317 adopts an IBR-type zinc-finger fold; it reads LKYQHLITNS…GENWHDPVKC (62 aa). The RING-type 2; atypical zinc finger occupies 344-375; sequence CPKCHVTIEKDGGCNHMVCRNQNCKAEFCWVC. Cys357 is an active-site residue. Cys362, Cys367, Cys372, Cys375, His382, and Cys389 together coordinate Zn(2+). The segment at 408 to 557 is ariadne domain; sequence RAALQRYLFY…EKDLWEYIED (150 aa).

It belongs to the RBR family. Ariadne subfamily. Interacts (via the first RING-type zinc finger) with UBE2L3. Associates with cullin-RING ubiquitin ligase (CRL) complexes containing CUL1, CUL2 and CUL3. Interacts with neddylated CUL1. Interacts with neddylated CUL2. Interacts with neddylated CUL3. Interacts with neddylated CUL4A. Widely expressed.

The protein resides in the cytoplasm. It localises to the nucleus. Its subcellular location is the cajal body. It catalyses the reaction [E2 ubiquitin-conjugating enzyme]-S-ubiquitinyl-L-cysteine + [acceptor protein]-L-lysine = [E2 ubiquitin-conjugating enzyme]-L-cysteine + [acceptor protein]-N(6)-ubiquitinyl-L-lysine.. It participates in protein modification; protein ubiquitination. Autoinhibited by the ariadne domain, which masks the second RING-type zinc finger that contains the active site and inhibits the E3 activity. Inhibition is relieved upon binding to neddylated cullin-RING ubiquitin ligase complexes, which activate the E3 ligase activity of ARIH1. Its function is as follows. E3 ubiquitin-protein ligase, which catalyzes ubiquitination of target proteins together with ubiquitin-conjugating enzyme E2 UBE2L3. Acts as an atypical E3 ubiquitin-protein ligase by working together with cullin-RING ubiquitin ligase (CRL) complexes and initiating ubiquitination of CRL substrates: associates with CRL complexes and specifically mediates addition of the first ubiquitin on CRLs targets. The initial ubiquitin is then elongated by CDC34/UBE2R1 and UBE2R2. E3 ubiquitin-protein ligase activity is activated upon binding to neddylated cullin-RING ubiquitin ligase complexes. Plays a role in protein translation in response to DNA damage by mediating ubiquitination of EIF4E2, the consequences of EIF4E2 ubiquitination are however unclear. According to a report, EIF4E2 ubiquitination leads to promote EIF4E2 cap-binding and protein translation arrest. According to another report EIF4E2 ubiquitination leads to its subsequent degradation. Acts as the ligase involved in ISGylation of EIF4E2. In vitro, controls the degradation of the LINC (LInker of Nucleoskeleton and Cytoskeleton) complex member SUN2 and may therefore have a role in the formation and localization of the LINC complex, and as a consequence, nuclear subcellular localization and nuclear morphology. The chain is E3 ubiquitin-protein ligase ARIH1 from Homo sapiens (Human).